A 736-amino-acid polypeptide reads, in one-letter code: Putative ATP-dependent RNA helicase CG14443 (736 aa).

Disordered stretches follow at residues 32 to 58 (TKSS…SSVL), 73 to 166 (GIEG…GERP), 183 to 237 (NSFK…NSWR), and 265 to 296 (SFTR…NTWK). 2 stretches are compositionally biased toward low complexity: residues 34-58 (SSIW…SSVL) and 125-160 (SSES…SHGS). The span at 190–199 (TSRENKESRS) shows a compositional bias: basic and acidic residues. The span at 277-296 (LCYQDQSKNPSRPSNYNTWK) shows a compositional bias: polar residues. The Q motif signature appears at 330-358 (LSFERSGFNATILQQLEDQGYDGPTPIQA). Residues 361 to 534 (WSIAKEGKNI…NKFLGQYTAI (174 aa)) form the Helicase ATP-binding domain. Position 374–381 (374–381 (SGKGTGKT)) interacts with ATP. The short motif at 482–485 (DNID) is the DEAD box element. The Helicase C-terminal domain maps to 561–719 (KVERLMKELT…LLQLAEEKMF (159 aa)).

The protein belongs to the DEAD box helicase family.

The enzyme catalyses ATP + H2O = ADP + phosphate + H(+). Probable ATP-binding RNA helicase. This chain is Putative ATP-dependent RNA helicase CG14443, found in Drosophila melanogaster (Fruit fly).